A 101-amino-acid chain; its full sequence is Large ribosomal subunit protein bL21 (101 aa).

The protein belongs to the bacterial ribosomal protein bL21 family. Part of the 50S ribosomal subunit. Contacts protein L20.

In terms of biological role, this protein binds to 23S rRNA in the presence of protein L20. The sequence is that of Large ribosomal subunit protein bL21 from Thermus thermophilus (strain ATCC BAA-163 / DSM 7039 / HB27).